The sequence spans 171 residues: Shikimate kinase (171 aa).

Residue 14–19 coordinates ATP; sequence GAGKST. Position 18 (serine 18) interacts with Mg(2+). Substrate-binding residues include aspartate 36, arginine 60, and glycine 82. Arginine 120 is an ATP binding site. Arginine 139 is a substrate binding site. Glutamine 156 is an ATP binding site.

Belongs to the shikimate kinase family. Monomer. It depends on Mg(2+) as a cofactor.

It is found in the cytoplasm. It carries out the reaction shikimate + ATP = 3-phosphoshikimate + ADP + H(+). Its pathway is metabolic intermediate biosynthesis; chorismate biosynthesis; chorismate from D-erythrose 4-phosphate and phosphoenolpyruvate: step 5/7. Functionally, catalyzes the specific phosphorylation of the 3-hydroxyl group of shikimic acid using ATP as a cosubstrate. This Shewanella pealeana (strain ATCC 700345 / ANG-SQ1) protein is Shikimate kinase.